The sequence spans 579 residues: Putative laccase-9 (579 aa).

A signal peptide spans 1-27 (MGTAKLPALLWLLAGVVLALAVNPAHG). 2 Plastocyanin-like domains span residues 36–152 (FITE…PKRG) and 162–319 (KEIP…YTDS). N-linked (GlcNAc...) asparagine glycosylation is found at Asn-41 and Asn-82. Residues His-86 and His-88 each contribute to the Cu cation site. Residue Asn-114 is glycosylated (N-linked (GlcNAc...) asparagine). Residues His-131 and His-133 each contribute to the Cu cation site. 3 N-linked (GlcNAc...) asparagine glycosylation sites follow: Asn-307, Asn-405, and Asn-446. The Plastocyanin-like 3 domain maps to 436 to 563 (PTAFVDPPVN…DTVFIVKDGK (128 aa)). Cu cation contacts are provided by His-480, His-483, and His-485. The N-linked (GlcNAc...) asparagine glycan is linked to Asn-496. Residues His-542, Cys-543, His-544, His-548, and Met-553 each coordinate Cu cation.

It belongs to the multicopper oxidase family. It depends on Cu cation as a cofactor.

It is found in the secreted. It localises to the extracellular space. The protein resides in the apoplast. It carries out the reaction 4 hydroquinone + O2 = 4 benzosemiquinone + 2 H2O. In terms of biological role, lignin degradation and detoxification of lignin-derived products. The sequence is that of Putative laccase-9 (LAC9) from Oryza sativa subsp. japonica (Rice).